The following is a 175-amino-acid chain: UPF0398 protein SPH_0478 (175 aa).

The protein belongs to the UPF0398 family.

The protein is UPF0398 protein SPH_0478 of Streptococcus pneumoniae (strain Hungary19A-6).